The chain runs to 88 residues: Protein transport protein Sec61 subunit beta (88 aa).

The interval M1 to S41 is disordered. The Cytoplasmic portion of the chain corresponds to M1 to P60. A helical transmembrane segment spans residues L61–A81.

Belongs to the SEC61-beta family. In terms of assembly, heterotrimeric complex composed of SEC61, SEB1 and SSS1.

Its subcellular location is the endoplasmic reticulum membrane. Necessary for protein translocation in the endoplasmic reticulum. In Kluyveromyces lactis (strain ATCC 8585 / CBS 2359 / DSM 70799 / NBRC 1267 / NRRL Y-1140 / WM37) (Yeast), this protein is Protein transport protein Sec61 subunit beta (SBH1).